The following is a 338-amino-acid chain: UPF0324 membrane protein TauZ (338 aa).

The next 10 helical transmembrane spans lie at 12–31, 36–55, 75–92, 96–118, 125–147, 162–184, 191–213, 223–245, 258–280, and 315–337; these read IEAA…TAQF, YGAP…NFLA, LGVA…LAAL, AIAL…SRLV, ALLT…AAVL, LSVT…FFGF, VFLG…IGPE, LIRV…ARGL, PGFV…PAAV, and AIAL…LHVL.

This sequence belongs to the UPF0324 family.

It localises to the cell membrane. The protein is UPF0324 membrane protein TauZ (tauZ) of Paracoccus denitrificans.